Reading from the N-terminus, the 895-residue chain is La RNA-binding domain-containing protein LHP1 (895 aa).

5 disordered regions span residues 24–265 (ANGN…PPPS), 285–344 (SATS…HDAT), 359–590 (GEDK…LGHG), 796–857 (PDAA…AQDV), and 870–895 (VNGE…NYEQ). Positions 31-75 (SSPSSSSSATPEPTSLSSSTSGKKAFSTATSKSGQQKQGSSPQPG) are enriched in low complexity. Basic and acidic residues predominate over residues 95–143 (QRTDRSEEKEKRGSSSKNWRERSHRDEKNQDDGEKRNGRERSKKEKGDK). Residues 152–170 (SATSSEKTAKSLSSSTKNA) show a composition bias toward low complexity. 2 stretches are compositionally biased toward polar residues: residues 172-184 (GVTS…NPIA) and 192-216 (KAQN…STIN). Basic and acidic residues predominate over residues 228–244 (DNWRARPAKVEKNEKTE). The span at 251-260 (QAQPQPQRQL) shows a compositional bias: low complexity. Residues 296–314 (KSDKEKSLTNGMVKEEDSG) show a composition bias toward basic and acidic residues. Over residues 325–336 (AAAAAAAGTSST) the composition is skewed to low complexity. Basic and acidic residues-rich tracts occupy residues 359–371 (GEDK…ERLN), 405–428 (HAAE…REGG), 452–468 (EGKK…DGHA), and 485–495 (GDVKETKEGDA). The span at 496 to 508 (RSASQQESSSHRS) shows a compositional bias: low complexity. The segment covering 510–521 (PSISASANTGID) has biased composition (polar residues). Gly residues predominate over residues 563 to 572 (RGSFGGGRAR). An HTH La-type RNA-binding domain is found at 706–796 (VPNLDPLRFY…GAESHRWVLP (91 aa)). Ser847 carries the phosphoserine modification. Basic and acidic residues predominate over residues 873-884 (EIKEKEEVKAME). Acidic residues predominate over residues 885–895 (NEGEESENYEQ).

May act as an RNA-binding protein. The polypeptide is La RNA-binding domain-containing protein LHP1 (Cryptococcus neoformans var. grubii serotype A (strain H99 / ATCC 208821 / CBS 10515 / FGSC 9487) (Filobasidiella neoformans var. grubii)).